The sequence spans 379 residues: Copper-containing nitrite reductase (379 aa).

The tat-type signal signal peptide spans methionine 1–alanine 32. Plastocyanin-like domains lie at glutamate 33–valine 214 and tyrosine 215–glycine 379. Histidine 134, histidine 139, histidine 174, cysteine 175, histidine 184, methionine 189, and histidine 345 together coordinate Cu cation.

Belongs to the multicopper oxidase family. Homotrimer. Cu(2+) serves as cofactor. The cofactor is Cu(+). It depends on FAD as a cofactor. Predicted to be exported by the Tat system. The position of the signal peptide cleavage has not been experimentally proven.

The protein resides in the periplasm. It carries out the reaction nitric oxide + Fe(III)-[cytochrome c] + H2O = Fe(II)-[cytochrome c] + nitrite + 2 H(+). It participates in nitrogen metabolism; nitrate reduction (denitrification); dinitrogen from nitrate: step 2/4. This chain is Copper-containing nitrite reductase (nirU), found in Neorhizobium galegae (Rhizobium galegae).